The chain runs to 89 residues: Putative RING finger protein 121R (89 aa).

The segment at 45 to 78 adopts an RING-type zinc-finger fold; sequence CPICLIAKVNTVLECTHVLCSNCVKKINVCPICR.

This is Putative RING finger protein 121R from Invertebrate iridescent virus 6 (IIV-6).